The primary structure comprises 432 residues: Adenylosuccinate synthetase (432 aa).

GTP contacts are provided by residues 13-19 and 41-43; these read GDEGKGK and GHT. Asp14 serves as the catalytic Proton acceptor. Mg(2+) contacts are provided by Asp14 and Gly41. IMP is bound by residues 14 to 17, 39 to 42, Thr130, Arg144, Gln225, Thr240, and Arg304; these read DEGK and NAGH. Residue His42 is the Proton donor of the active site. Residue 300–306 coordinates substrate; it reads ATTGRSR. GTP-binding positions include Arg306, 332–334, and 415–417; these read KLD and STG.

This sequence belongs to the adenylosuccinate synthetase family. In terms of assembly, homodimer. The cofactor is Mg(2+).

It is found in the cytoplasm. The catalysed reaction is IMP + L-aspartate + GTP = N(6)-(1,2-dicarboxyethyl)-AMP + GDP + phosphate + 2 H(+). It participates in purine metabolism; AMP biosynthesis via de novo pathway; AMP from IMP: step 1/2. Its function is as follows. Plays an important role in the de novo pathway of purine nucleotide biosynthesis. Catalyzes the first committed step in the biosynthesis of AMP from IMP. The sequence is that of Adenylosuccinate synthetase from Yersinia pseudotuberculosis serotype O:1b (strain IP 31758).